Here is a 239-residue protein sequence, read N- to C-terminus: Serine protease SplF (239 aa).

A signal peptide spans 1–36 (MNKNIIIKSIAALTILTSITGVGTTVVDGIQQTAKA). Residues histidine 75, aspartate 114, and serine 192 each act as charge relay system in the active site.

The protein belongs to the peptidase S1B family.

The protein resides in the secreted. The polypeptide is Serine protease SplF (splF) (Staphylococcus aureus (strain MSSA476)).